The sequence spans 531 residues: Retinoid isomerohydrolase (531 aa).

Residue cysteine 112 is the site of S-palmitoyl cysteine; in membrane form attachment. Positions 180, 241, and 313 each coordinate Fe cation. The S-palmitoyl cysteine; in membrane form moiety is linked to residue cysteine 329. Histidine 526 lines the Fe cation pocket.

The protein belongs to the carotenoid oxygenase family. The cofactor is Fe(2+). In terms of processing, palmitoylated. Retinal pigment epithelium-specific.

The protein resides in the cytoplasm. It localises to the cell membrane. The enzyme catalyses an all-trans-retinyl ester + H2O = 11-cis-retinol + a fatty acid + H(+). The catalysed reaction is lutein = (3R,3'S)-zeaxanthin. It carries out the reaction all-trans-retinyl hexadecanoate + H2O = 11-cis-retinol + hexadecanoate + H(+). Plays important roles in the production of 11-cis retinal and in visual pigment regeneration. Capable of catalyzing the isomerization of lutein to meso-zeaxanthin an eye-specific carotenoid. The chain is Retinoid isomerohydrolase (rpe65a) from Danio rerio (Zebrafish).